Consider the following 331-residue polypeptide: Adenosine deaminase (331 aa).

Zn(2+)-binding residues include His-12 and His-14. Positions 14, 16, and 170 each coordinate substrate. His-197 contacts Zn(2+). Glu-200 functions as the Proton donor in the catalytic mechanism. Asp-278 is a binding site for Zn(2+). Asp-279 serves as a coordination point for substrate.

This sequence belongs to the metallo-dependent hydrolases superfamily. Adenosine and AMP deaminases family. Adenosine deaminase subfamily. Zn(2+) is required as a cofactor.

The catalysed reaction is adenosine + H2O + H(+) = inosine + NH4(+). The enzyme catalyses 2'-deoxyadenosine + H2O + H(+) = 2'-deoxyinosine + NH4(+). Functionally, catalyzes the hydrolytic deamination of adenosine and 2-deoxyadenosine. This Shewanella sp. (strain MR-7) protein is Adenosine deaminase.